The primary structure comprises 152 residues: UPF0179 protein HQ_3004A (152 aa).

This sequence belongs to the UPF0179 family.

This is UPF0179 protein HQ_3004A from Haloquadratum walsbyi (strain DSM 16790 / HBSQ001).